The primary structure comprises 330 residues: Autoinducer 2 import system permease protein LsrD (330 aa).

Residues 1–4 (MRIR) are Cytoplasmic-facing. Residues 5–25 (YGWELALAALLVIEIVSFGAI) traverse the membrane as a helical segment. The Periplasmic portion of the chain corresponds to 26-42 (NPRMLDLNMLLFSTSDF). Residues 43–63 (ICIGIVALPLTMVIVSGGIDI) traverse the membrane as a helical segment. Topologically, residues 64-67 (SFGS) are cytoplasmic. The next 2 helical transmembrane spans lie at 68–88 (TIGL…PMPL) and 89–109 (AILL…GLII). Residues 110-115 (YTKVNP) lie on the Cytoplasmic side of the membrane. A helical membrane pass occupies residues 116-136 (LVITLGTLYLFAGSALLLSGM). Residues 137–159 (AGATGYEGIGGFPMAFTDFANLD) are Periplasmic-facing. The chain crosses the membrane as a helical span at residues 160 to 180 (VLGLPVPLIIFLICLLVFWLW). At 181 to 209 (LHKTHAGRNVFLIGQSPRVALYSAIPVNR) the chain is on the cytoplasmic side. The helical transmembrane segment at 210–230 (TLCALYAMTGLASAVAAVLLV) threads the bilayer. The Periplasmic portion of the chain corresponds to 231–237 (SYFGSAR). Transmembrane regions (helical) follow at residues 238-258 (SDLG…GGAN) and 259-279 (IYGG…VGYL). At 280–285 (QQGLQM) the chain is on the periplasmic side. A helical transmembrane segment spans residues 286 to 306 (AGVPNQVSSALSGALLIVVVV). Residues 307–330 (GRSVSLHRQQIKEWLARRANNPLP) are Cytoplasmic-facing.

This sequence belongs to the binding-protein-dependent transport system permease family. AraH/RbsC subfamily. As to quaternary structure, the complex is composed of two ATP-binding proteins (LsrA), two transmembrane proteins (LsrC and LsrD) and a solute-binding protein (LsrB).

The protein resides in the cell inner membrane. Functionally, part of the ABC transporter complex LsrABCD involved in autoinducer 2 (AI-2) import. Probably responsible for the translocation of the substrate across the membrane. The protein is Autoinducer 2 import system permease protein LsrD (lsrD) of Escherichia coli O157:H7.